A 130-amino-acid polypeptide reads, in one-letter code: Small ribosomal subunit protein uS9 (130 aa).

Positions 107 to 130 (DARMKERKKPGLKKARKASQFSKR) are disordered. Residues 111–130 (KERKKPGLKKARKASQFSKR) show a composition bias toward basic residues.

Belongs to the universal ribosomal protein uS9 family.

The protein is Small ribosomal subunit protein uS9 of Ligilactobacillus salivarius (strain UCC118) (Lactobacillus salivarius).